Consider the following 419-residue polypeptide: tRNA (guanine-N(7)-)-methyltransferase non-catalytic subunit wuho (419 aa).

Over residues 51–61 the composition is skewed to low complexity; that stretch reads STAEQQSAAAE. Residues 51–75 are disordered; that stretch reads STAEQQSAAAETGGGSVVEGEEPKD. 3 WD repeats span residues 87 to 127, 174 to 213, and 217 to 255; these read APTV…AQLV, GHLSIVYDILWTGDQQHIITSDRDDKIRVTNYPATFDIHS, and GHKEFVSGLALLSDEHICSVSGDKTLRVWNFKAGKELLR.

Belongs to the WD repeat TRM82 family. As to quaternary structure, forms a heterodimer with the catalytic subunit Mettl1. Interacts with mei-P26 and weakly interacts with bgcn; required for the function or formation of the mei-P26-bgcn-bam-sxl complex. Interacts with nanos; may be involved in mei-P26-dependent derepression of the BMP signaling pathway. Interacts with Myc; the interaction may be mediated by mei-P26 and may be involved in the regulation of ribosome biogenesis. As to expression, in testis, it is present at high level in hub cells, a niche for germline stem cells of testis. Ubiquitously expressed in all testicular cells throughout spermatogenesis. Ubiquitously expressed in all germline and somatic cells of the ovary.

The protein resides in the nucleus. Its subcellular location is the cytoplasm. The protein operates within tRNA modification; N(7)-methylguanine-tRNA biosynthesis. Required for the Mettl1-dependent formation of N(7)-methylguanine at position 46 (m7G46) in tRNA. In the Mettl1-wuho methyltransferase complex, it is required to stabilize and induce conformational changes of the catalytic subunit. Required for binding of nanos mRNA and repression of translation by the mei-P26-bgcn-bam-sxl complex. May cooperate with mei-P26 and nanos to derepress the BMP signaling pathway. May cooperate with mei-P26 to suppress expression of a subset of microRNAs. May cooperate with mei-P26 to regulate bam expression levels in germline cells during gametogenesis. Required to promote mitosis to meiosis transition during gametogenesis. May regulate germline cell division in part by regulating ribosome biogenesis. The chain is tRNA (guanine-N(7)-)-methyltransferase non-catalytic subunit wuho from Drosophila willistoni (Fruit fly).